A 536-amino-acid chain; its full sequence is CTP synthase (536 aa).

Residues 1-267 form an amidoligase domain region; the sequence is MSKFVFVTGG…CKQTLNCLEL (267 aa). S13 is a CTP binding site. S13 contacts UTP. Residues 14–19 and D71 contribute to the ATP site; that span reads SIGKGI. Residues D71 and E141 each contribute to the Mg(2+) site. Residues 148-150, 188-193, and K224 contribute to the CTP site; these read DIE and KTKPTQ. UTP-binding positions include 188–193 and K224; that span reads KTKPTQ. In terms of domain architecture, Glutamine amidotransferase type-1 spans 292–534; that stretch reads KVALVGKYIE…IKASQEKLEQ (243 aa). Residue G354 coordinates L-glutamine. C381 acts as the Nucleophile; for glutamine hydrolysis in catalysis. Residues 382 to 385, E405, and R462 contribute to the L-glutamine site; that span reads LGMQ. Residues H507 and E509 contribute to the active site.

The protein belongs to the CTP synthase family. As to quaternary structure, homotetramer.

It catalyses the reaction UTP + L-glutamine + ATP + H2O = CTP + L-glutamate + ADP + phosphate + 2 H(+). The catalysed reaction is L-glutamine + H2O = L-glutamate + NH4(+). It carries out the reaction UTP + NH4(+) + ATP = CTP + ADP + phosphate + 2 H(+). The protein operates within pyrimidine metabolism; CTP biosynthesis via de novo pathway; CTP from UDP: step 2/2. Allosterically activated by GTP, when glutamine is the substrate; GTP has no effect on the reaction when ammonia is the substrate. The allosteric effector GTP functions by stabilizing the protein conformation that binds the tetrahedral intermediate(s) formed during glutamine hydrolysis. Inhibited by the product CTP, via allosteric rather than competitive inhibition. Its function is as follows. Catalyzes the ATP-dependent amination of UTP to CTP with either L-glutamine or ammonia as the source of nitrogen. Regulates intracellular CTP levels through interactions with the four ribonucleotide triphosphates. This is CTP synthase from Prochlorococcus marinus subsp. pastoris (strain CCMP1986 / NIES-2087 / MED4).